The following is a 403-amino-acid chain: Tyrosine--tRNA ligase (403 aa).

The short motif at 42-51 (PTAPDLHLGH) is the 'HIGH' region element. The short motif at 226-230 (KMSKS) is the 'KMSKS' region element. Lys-229 lines the ATP pocket. An S4 RNA-binding domain is found at 336–396 (MPISAVLNKA…GKKAFGRVTL (61 aa)).

Belongs to the class-I aminoacyl-tRNA synthetase family. TyrS type 2 subfamily. In terms of assembly, homodimer.

The protein localises to the cytoplasm. The catalysed reaction is tRNA(Tyr) + L-tyrosine + ATP = L-tyrosyl-tRNA(Tyr) + AMP + diphosphate + H(+). Its function is as follows. Catalyzes the attachment of tyrosine to tRNA(Tyr) in a two-step reaction: tyrosine is first activated by ATP to form Tyr-AMP and then transferred to the acceptor end of tRNA(Tyr). The sequence is that of Tyrosine--tRNA ligase from Pseudomonas syringae pv. syringae (strain B728a).